Here is a 265-residue protein sequence, read N- to C-terminus: Putative hydro-lyase PA2116 (265 aa).

The protein belongs to the D-glutamate cyclase family.

The chain is Putative hydro-lyase PA2116 from Pseudomonas aeruginosa (strain ATCC 15692 / DSM 22644 / CIP 104116 / JCM 14847 / LMG 12228 / 1C / PRS 101 / PAO1).